The chain runs to 1055 residues: RapA guanosine triphosphatase-activating protein 1 (1055 aa).

6 disordered regions span residues 76–100 (LSPQ…EEER), 256–292 (NHQP…SSLT), 418–525 (QQLL…FLGV), 544–570 (THAT…SPPL), 603–629 (TTQL…PPSE), and 943–969 (NNNS…NLPT). The segment covering 89–100 (QHEKITPEEEER) has biased composition (basic and acidic residues). Composition is skewed to low complexity over residues 262–292 (STPR…SSLT), 442–455 (DFNL…NNNN), and 469–482 (TTTT…NNNN). The segment covering 483 to 494 (ISPQHSGTSGSP) has biased composition (polar residues). Composition is skewed to low complexity over residues 603 to 622 (TTQL…TSQP) and 943 to 966 (NNNS…SDSN). Positions 779-1048 (LIQFEAKNIH…RTRKEFLHSF (270 aa)) constitute a Rap-GAP domain.

The protein resides in the cytoplasm. The protein localises to the cell cortex. Mediates the deactivation of rap1 and plays an important role in spatially and temporally regulating cell adhesion and chemotaxis by controlling attachment disassembly in the leading edge through the regulation of myosin II assembly and disassembly. Overexpression leads to defective chemotaxis. The chain is RapA guanosine triphosphatase-activating protein 1 (rapgap1) from Dictyostelium discoideum (Social amoeba).